We begin with the raw amino-acid sequence, 780 residues long: Gelsolin (780 aa).

Positions Met1–Ala25 are cleaved as a signal peptide. A disordered region spans residues Ala28–Ser48. Residues Val51–Phe174 are actin-severing. One copy of the Gelsolin-like 1 repeat lies at Phe74–Phe155. Residue Tyr84 is modified to Phosphotyrosine. 6 residues coordinate Ca(2+): Gly90, Asp91, Glu122, Asp134, Gly139, and Ala141. The tract at residues Asp121–Gly124 is actin-actin interfilament contact point. Position 160 to 167 (Lys160 to Lys167) interacts with a 1,2-diacyl-sn-glycero-3-phospho-(1D-myo-inositol-4,5-bisphosphate). Ca(2+) is bound at residue Val170. Arg186–Arg194 lines the a 1,2-diacyl-sn-glycero-3-phospho-(1D-myo-inositol-4,5-bisphosphate) pocket. One copy of the Gelsolin-like 2 repeat lies at Val196–Met268. Ca(2+) is bound by residues Gly211 and Asp212. The cysteines at positions 213 and 226 are disulfide-linked. Residues Glu234, Asp284, Glu327, Asp328, and Glu352 each coordinate Ca(2+). Residues Gly244–Ala286 are disordered. One copy of the Gelsolin-like 3 repeat lies at Asp315–Phe387. Residues Tyr407 and Tyr463 each carry the phosphotyrosine modification. Residues Ala432 to Ala780 form an actin-binding, Ca-sensitive region. The stretch at Ser453–Met534 is one Gelsolin-like 4 repeat. Residues Gly469, Asp470, Glu500, Asp512, Gly517, Pro519, and Thr549 each coordinate Ca(2+). Residues Ala576 to Trp640 form a Gelsolin-like 5 repeat. An N6-acetyllysine modification is found at Lys582. 2 residues coordinate Ca(2+): Asn589 and Asp590. Tyr601 carries the post-translational modification Phosphotyrosine. Glu612 contacts Ca(2+). Residue Tyr649 is modified to Phosphotyrosine. The Gelsolin-like 6 repeat unit spans residues Ile679–Phe754. Positions 694, 695, and 717 each coordinate Ca(2+). Thr740 is modified (phosphothreonine).

It belongs to the villin/gelsolin family. Binds to actin and to fibronectin. Identified in a complex composed of ACTA1, COBL, GSN and TMSB4X. Interacts with the inactive form of EIF2AK2/PKR. Interacts with FLII. In terms of processing, phosphorylated on tyrosine residues in vitro.

The protein localises to the secreted. The protein resides in the cytoplasm. It localises to the cytoskeleton. Functionally, calcium-regulated, actin-modulating protein that binds to the plus (or barbed) ends of actin monomers or filaments, preventing monomer exchange (end-blocking or capping). It can promote the assembly of monomers into filaments (nucleation) as well as sever filaments already formed. Plays a role in ciliogenesis. This Rattus norvegicus (Rat) protein is Gelsolin (Gsn).